A 102-amino-acid polypeptide reads, in one-letter code: Large ribosomal subunit protein bL21 (102 aa).

A compositionally biased stretch (basic residues) spans 79–91; it reads RKDSKRKKGHRQP. Positions 79-102 are disordered; that stretch reads RKDSKRKKGHRQPYTKLTIDKINA.

This sequence belongs to the bacterial ribosomal protein bL21 family. In terms of assembly, part of the 50S ribosomal subunit. Contacts protein L20.

In terms of biological role, this protein binds to 23S rRNA in the presence of protein L20. The sequence is that of Large ribosomal subunit protein bL21 from Staphylococcus epidermidis (strain ATCC 35984 / DSM 28319 / BCRC 17069 / CCUG 31568 / BM 3577 / RP62A).